Here is a 347-residue protein sequence, read N- to C-terminus: Putative [LysW]-L-2-aminoadipate/[LysW]-L-glutamate phosphate reductase (347 aa).

NADP(+) is bound at residue 9-12 (SGYI). Cysteine 149 is an active-site residue. Asparagine 314 contributes to the NADP(+) binding site.

Belongs to the NAGSA dehydrogenase family. Type 1 subfamily. LysY sub-subfamily.

It localises to the cytoplasm. It catalyses the reaction [amino-group carrier protein]-C-terminal-N-(1-carboxy-5-oxopentan-1-yl)-L-glutamine + phosphate + NADP(+) = [amino-group carrier protein]-C-terminal-N-(1-carboxy-5-phosphooxy-5-oxopentan-1-yl)-L-glutamine + NADPH + H(+). The enzyme catalyses [amino-group carrier protein]-C-terminal-gamma-(L-glutamyl-5-semialdehyde)-L-glutamate + phosphate + NADP(+) = [amino-group carrier protein]-C-terminal-gamma-(5-phospho-L-glutamyl)-L-glutamate + NADPH + H(+). Its pathway is amino-acid biosynthesis; L-lysine biosynthesis via AAA pathway; L-lysine from L-alpha-aminoadipate (Thermus route): step 3/5. It participates in amino-acid biosynthesis; L-arginine biosynthesis. Functionally, involved in both the arginine and lysine biosynthetic pathways. The chain is Putative [LysW]-L-2-aminoadipate/[LysW]-L-glutamate phosphate reductase from Picrophilus torridus (strain ATCC 700027 / DSM 9790 / JCM 10055 / NBRC 100828 / KAW 2/3).